The following is a 339-amino-acid chain: Undecaprenyl-phosphate 4-deoxy-4-formamido-L-arabinose transferase (339 aa).

Transmembrane regions (helical) follow at residues 235 to 255 and 269 to 289; these read LSLV…FLLV and LFVL…GMGL.

Belongs to the glycosyltransferase 2 family.

The protein resides in the cell inner membrane. The catalysed reaction is UDP-4-deoxy-4-formamido-beta-L-arabinose + di-trans,octa-cis-undecaprenyl phosphate = 4-deoxy-4-formamido-alpha-L-arabinopyranosyl di-trans,octa-cis-undecaprenyl phosphate + UDP. The protein operates within glycolipid biosynthesis; 4-amino-4-deoxy-alpha-L-arabinose undecaprenyl phosphate biosynthesis; 4-amino-4-deoxy-alpha-L-arabinose undecaprenyl phosphate from UDP-4-deoxy-4-formamido-beta-L-arabinose and undecaprenyl phosphate: step 1/2. Its pathway is bacterial outer membrane biogenesis; lipopolysaccharide biosynthesis. Catalyzes the transfer of 4-deoxy-4-formamido-L-arabinose from UDP to undecaprenyl phosphate. The modified arabinose is attached to lipid A and is required for resistance to polymyxin and cationic antimicrobial peptides. This Pseudomonas aeruginosa (strain LESB58) protein is Undecaprenyl-phosphate 4-deoxy-4-formamido-L-arabinose transferase.